The chain runs to 395 residues: E3 ubiquitin-protein ligase NHLRC1 (395 aa).

Residues 26–72 (CKVCFEKFGHRQQRRPRNLSCGHVVCLACVAALAHPRTLALECPFCR) form an RING-type zinc finger. NHL repeat units follow at residues 113-157 (ALTC…FDSG), 161-204 (AHQF…FDFF), 205-245 (GQIK…LDVD), 248-300 (EGVL…FSSS), 301-349 (MQLV…LGKP), and 350-393 (EEFP…YKVD).

As to quaternary structure, interacts with AGL. Interacts (via the NHL repeats) with EPM2A/laforin. Forms a complex with EPM2A/laforin and HSP70. Interacts with PRDM8. As to expression, expressed in brain, cerebellum, spinal cord, medulla, heart, liver, skeletal muscle and pancreas.

Its subcellular location is the endoplasmic reticulum. The protein resides in the nucleus. The enzyme catalyses S-ubiquitinyl-[E2 ubiquitin-conjugating enzyme]-L-cysteine + [acceptor protein]-L-lysine = [E2 ubiquitin-conjugating enzyme]-L-cysteine + N(6)-ubiquitinyl-[acceptor protein]-L-lysine.. Its pathway is protein modification; protein ubiquitination. Its function is as follows. E3 ubiquitin-protein ligase. Together with the phosphatase EPM2A/laforin, appears to be involved in the clearance of toxic polyglucosan and protein aggregates via multiple pathways. In complex with EPM2A/laforin and HSP70, suppresses the cellular toxicity of misfolded proteins by promoting their degradation through the ubiquitin-proteasome system (UPS). Ubiquitinates the glycogen-targeting protein phosphatase subunits PPP1R3C/PTG and PPP1R3D in a laforin-dependent manner and targets them for proteasome-dependent degradation, thus decreasing glycogen accumulation. Polyubiquitinates EPM2A/laforin and ubiquitinates AGL and targets them for proteasome-dependent degradation. Also promotes proteasome-independent protein degradation through the macroautophagy pathway. The sequence is that of E3 ubiquitin-protein ligase NHLRC1 (NHLRC1) from Homo sapiens (Human).